We begin with the raw amino-acid sequence, 467 residues long: Nuclear distribution protein nudF 1 (467 aa).

The LisH domain maps to 9-41 (QAEELHKSIIAYLASVNLSESATTLRAELGDAV). Residues 60–87 (TSVVRLQKKIMDLESRCAALQSELDSAT) are a coiled coil. WD repeat units follow at residues 113 to 154 (SHRS…RTVK), 156 to 196 (HTKA…KNIR), 200 to 247 (GHDH…CVKT), 250 to 289 (GHVD…TRST), 292 to 352 (GHEH…IKTL), 354 to 393 (GHDN…KCVR), 398 to 428 (THEH…NGTP), and 429 to 466 (AATT…RVFA). The segment covering 417-437 (GANGDAGANGTPAATTTSNGA) has biased composition (low complexity). Positions 417 to 441 (GANGDAGANGTPAATTTSNGARQDP) are disordered.

The protein belongs to the WD repeat LIS1/nudF family. In terms of assembly, self-associates. Interacts with nudE and dynein.

It is found in the cytoplasm. The protein resides in the cytoskeleton. Its subcellular location is the spindle pole. Positively regulates the activity of the minus-end directed microtubule motor protein dynein. May enhance dynein-mediated microtubule sliding by targeting dynein to the microtubule plus end. Required for nuclear migration during vegetative growth as well as development. Required for retrograde early endosome (EE) transport from the hyphal tip. Required for localization of dynein to the mitotic spindle poles. Recruits additional proteins to the dynein complex at SPBs. The sequence is that of Nuclear distribution protein nudF 1 from Aspergillus clavatus (strain ATCC 1007 / CBS 513.65 / DSM 816 / NCTC 3887 / NRRL 1 / QM 1276 / 107).